The chain runs to 87 residues: Hemocyanin alpha chain (87 aa).

Belongs to the tyrosinase family. Hemocyanin subfamily. Polymer that contains six different types of chains (alpha, beta, gamma, delta, epsilon, and zeta). As to expression, hemolymph.

The protein resides in the secreted. It localises to the extracellular space. Hemocyanins are copper-containing oxygen carriers occurring freely dissolved in the hemolymph of many mollusks and arthropods. In Tachypleus tridentatus (Japanese horseshoe crab), this protein is Hemocyanin alpha chain.